The following is a 296-amino-acid chain: Vacuolar histidine transporter YPQ3 (296 aa).

Residues 1–12 (MKLIPIILNAKN) are Vacuolar-facing. The region spanning 10–76 (AKNLSGMAGS…QNLLPTMIIL (67 aa)) is the PQ-loop 1 domain. Residues 13–33 (LSGMAGSISICCWIVVFVPQI) form a helical membrane-spanning segment. Over 34 to 44 (YENFRRQSAEG) the chain is Cytoplasmic. The helical transmembrane segment at 45-65 (LSLLFIVLWLLGDIFNVMGAM) threads the bilayer. The Vacuolar segment spans residues 66-68 (MQN). The helical transmembrane segment at 69 to 89 (LLPTMIILAAYYTLADLILLI) threads the bilayer. The Cytoplasmic portion of the chain corresponds to 90–163 (QCMWYDKEKK…RTIVVKEREN (74 aa)). The chain crosses the membrane as a helical span at residues 164–184 (FFNDFLIVSGVLIAGILSWYI). The Vacuolar segment spans residues 185 to 199 (SYCSGLDNGIPKKKP). The chain crosses the membrane as a helical span at residues 200-220 (AFEQINLPAQILGYLSAILYL). One can recognise a PQ-loop 2 domain in the interval 208 to 270 (AQILGYLSAI…ASWLIGSAGT (63 aa)). Topologically, residues 221-238 (GSRIPQIVLNFKRKSCEG) are cytoplasmic. The chain crosses the membrane as a helical span at residues 239-259 (VSFLFFLFACLGNTSFIISVL). The Vacuolar portion of the chain corresponds to 260-262 (SAS). A helical transmembrane segment spans residues 263-283 (WLIGSAGTLLMDFTVFIQFFL). At 284-296 (YAKPKYEKILIDN) the chain is on the cytoplasmic side.

Belongs to the laat-1 family.

Its subcellular location is the vacuole membrane. It localises to the mitochondrion membrane. In terms of biological role, amino acid transporter that moves histidine into the vacuole. May also contribute to low affinity arginine import into the vacuole. May function as an amino acid/proton antiporter. The sequence is that of Vacuolar histidine transporter YPQ3 from Saccharomyces cerevisiae (strain ATCC 204508 / S288c) (Baker's yeast).